The following is a 577-amino-acid chain: ER degradation-enhancing alpha-mannosidase-like protein 2 (577 aa).

Residues 1-21 (MPFRLLIPLGLVCVLLPLHHG) form the signal peptide. N-linked (GlcNAc...) asparagine glycans are attached at residues asparagine 90, asparagine 112, asparagine 289, and asparagine 450. The interval 513–561 (PKRAQRKTVRSGPWEPQSGPATLSSPANQPREKQPAQQRTPLLSCPSQP) is disordered. 2 stretches are compositionally biased toward polar residues: residues 531-540 (GPATLSSPAN) and 547-561 (PAQQRTPLLSCPSQP).

It belongs to the glycosyl hydrolase 47 family. Post-translationally, N-glycosylated.

It localises to the endoplasmic reticulum lumen. Involved in the endoplasmic reticulum-associated degradation (ERAD) pathway that targets misfolded glycoproteins for degradation in an N-glycan-dependent manner. May initiate ERAD by promoting the first mannose trimming step of ERAD substrates, from Man9GlcNAc2 to Man8GlcNAc2. Seems to recognize and bind to exposed hydrophobic regions in target proteins. This is ER degradation-enhancing alpha-mannosidase-like protein 2 from Mus musculus (Mouse).